Reading from the N-terminus, the 264-residue chain is Putative hydroxypyruvate isomerase (264 aa).

Residues Glu-145 and Glu-243 each act as proton donor/acceptor in the active site.

The protein belongs to the hyi family.

It carries out the reaction 3-hydroxypyruvate = 2-hydroxy-3-oxopropanoate. Functionally, catalyzes the reversible isomerization between hydroxypyruvate and 2-hydroxy-3-oxopropanoate (also termed tartronate semialdehyde). In Drosophila melanogaster (Fruit fly), this protein is Putative hydroxypyruvate isomerase (Gip).